A 188-amino-acid chain; its full sequence is Large ribosomal subunit protein uL6 (188 aa).

Belongs to the universal ribosomal protein uL6 family.

In Tetrahymena thermophila (strain SB210), this protein is Large ribosomal subunit protein uL6 (RPL9).